A 404-amino-acid chain; its full sequence is S-adenosylmethionine synthase (404 aa).

His17 contacts ATP. Asp19 lines the Mg(2+) pocket. Glu45 provides a ligand contact to K(+). 2 residues coordinate L-methionine: Glu58 and Gln101. Residues 101 to 111 (QSPDINRGVDR) form a flexible loop region. Residues 172–174 (DAK), 245–246 (RF), Asp254, 260–261 (RK), Ala277, and Lys281 each bind ATP. Residue Asp254 participates in L-methionine binding. Lys285 lines the L-methionine pocket.

Belongs to the AdoMet synthase family. In terms of assembly, homotetramer; dimer of dimers. Mg(2+) is required as a cofactor. K(+) serves as cofactor.

The protein resides in the cytoplasm. The enzyme catalyses L-methionine + ATP + H2O = S-adenosyl-L-methionine + phosphate + diphosphate. It participates in amino-acid biosynthesis; S-adenosyl-L-methionine biosynthesis; S-adenosyl-L-methionine from L-methionine: step 1/1. Catalyzes the formation of S-adenosylmethionine (AdoMet) from methionine and ATP. The overall synthetic reaction is composed of two sequential steps, AdoMet formation and the subsequent tripolyphosphate hydrolysis which occurs prior to release of AdoMet from the enzyme. This chain is S-adenosylmethionine synthase, found in Pelodictyon phaeoclathratiforme (strain DSM 5477 / BU-1).